The following is a 40-amino-acid chain: Photosystem II reaction center protein J (40 aa).

Residues 8-28 (IPLWIIGTVAGILVIGLVGIF) traverse the membrane as a helical segment.

The protein belongs to the PsbJ family. In terms of assembly, PSII is composed of 1 copy each of membrane proteins PsbA, PsbB, PsbC, PsbD, PsbE, PsbF, PsbH, PsbI, PsbJ, PsbK, PsbL, PsbM, PsbT, PsbX, PsbY, PsbZ, Psb30/Ycf12, at least 3 peripheral proteins of the oxygen-evolving complex and a large number of cofactors. It forms dimeric complexes.

It localises to the plastid. Its subcellular location is the chloroplast thylakoid membrane. In terms of biological role, one of the components of the core complex of photosystem II (PSII). PSII is a light-driven water:plastoquinone oxidoreductase that uses light energy to abstract electrons from H(2)O, generating O(2) and a proton gradient subsequently used for ATP formation. It consists of a core antenna complex that captures photons, and an electron transfer chain that converts photonic excitation into a charge separation. This chain is Photosystem II reaction center protein J, found in Spinacia oleracea (Spinach).